The chain runs to 941 residues: Glycine dehydrogenase (decarboxylating) (941 aa).

Position 692 is an N6-(pyridoxal phosphate)lysine (K692).

It belongs to the GcvP family. As to quaternary structure, the glycine cleavage system is composed of four proteins: P, T, L and H. Pyridoxal 5'-phosphate is required as a cofactor.

It carries out the reaction N(6)-[(R)-lipoyl]-L-lysyl-[glycine-cleavage complex H protein] + glycine + H(+) = N(6)-[(R)-S(8)-aminomethyldihydrolipoyl]-L-lysyl-[glycine-cleavage complex H protein] + CO2. Functionally, the glycine cleavage system catalyzes the degradation of glycine. The P protein binds the alpha-amino group of glycine through its pyridoxal phosphate cofactor; CO(2) is released and the remaining methylamine moiety is then transferred to the lipoamide cofactor of the H protein. The protein is Glycine dehydrogenase (decarboxylating) of Mycolicibacterium paratuberculosis (strain ATCC BAA-968 / K-10) (Mycobacterium paratuberculosis).